The primary structure comprises 273 residues: Putative phosphoenolpyruvate synthase regulatory protein (273 aa).

Gly-153–Thr-160 serves as a coordination point for ADP.

The protein belongs to the pyruvate, phosphate/water dikinase regulatory protein family. PSRP subfamily.

It catalyses the reaction [pyruvate, water dikinase] + ADP = [pyruvate, water dikinase]-phosphate + AMP + H(+). It carries out the reaction [pyruvate, water dikinase]-phosphate + phosphate + H(+) = [pyruvate, water dikinase] + diphosphate. Bifunctional serine/threonine kinase and phosphorylase involved in the regulation of the phosphoenolpyruvate synthase (PEPS) by catalyzing its phosphorylation/dephosphorylation. The sequence is that of Putative phosphoenolpyruvate synthase regulatory protein from Delftia acidovorans (strain DSM 14801 / SPH-1).